The primary structure comprises 648 residues: Chaperone protein HtpG (648 aa).

The interval 1 to 353 (MNARVEQLEF…AQDMSLNVSR (353 aa)) is a; substrate-binding. A b region spans residues 354 to 567 (EILQQDRQIK…TFGITPALAR (214 aa)). The interval 568-648 (IYRATGQDVP…LLADRLTRTL (81 aa)) is c.

Belongs to the heat shock protein 90 family. In terms of assembly, homodimer.

Its subcellular location is the cytoplasm. Its function is as follows. Molecular chaperone. Has ATPase activity. The sequence is that of Chaperone protein HtpG from Mycobacterium ulcerans (strain Agy99).